Here is a 288-residue protein sequence, read N- to C-terminus: Ninja-family protein 6 (288 aa).

Disordered stretches follow at residues 1 to 50 (MASR…KRPR) and 66 to 207 (LHAD…TRTG). Gly residues predominate over residues 12–23 (AGEGAGPPGDAG). Low complexity predominate over residues 76–86 (LPLLRTTSLPT). Residues 91–103 (ERWRRREMQSRRR) are compositionally biased toward basic and acidic residues. Residues 131-173 (RRSNASQGSNSASTTEQGIGGSMFNQSADAKSPSTSDNRNQND) show a composition bias toward polar residues. Low complexity predominate over residues 195–207 (RLRTLGSLTTRTG).

The protein belongs to the Ninja family.

The protein resides in the nucleus. The chain is Ninja-family protein 6 from Zea mays (Maize).